A 361-amino-acid polypeptide reads, in one-letter code: uncharacterized protein (361 aa).

The signal sequence occupies residues 1–17; that stretch reads MNLFIYVLLLSIWTSSC. Residues 18-47 lie on the Extracellular side of the membrane; the sequence is LDRNESNGSATAVTTHAEFKQTKLQELRRR. Asparagine 24 carries an N-linked (GlcNAc...) asparagine glycan. The chain crosses the membrane as a helical span at residues 48 to 68; sequence LLIIVIGTLITGYMVSCTCLL. The Cytoplasmic segment spans residues 69–361; it reads HYSCDSEEAH…EDIYKNSRNN (293 aa). Positions 95–106 are enriched in polar residues; the sequence is SSKISFTDSKSP. Residues 95-197 are disordered; it reads SSKISFTDSK…SQVSPSYPEK (103 aa). The segment covering 144 to 158 has biased composition (low complexity); sequence PSSQKKPSKPSAPKK. Over residues 169–185 the composition is skewed to basic residues; the sequence is HRTRSPKKAHRQAHAHK.

The protein localises to the membrane. This is an uncharacterized protein from Bos taurus (Bovine).